Reading from the N-terminus, the 1253-residue chain is Pleckstrin homology-like domain family B member 2 (1253 aa).

Residues 1–12 (MEEHSYIQKELD) show a composition bias toward basic and acidic residues. 3 disordered regions span residues 1–43 (MEEH…PKKY), 60–159 (LTLS…KSHD), and 187–212 (DAGPPPISRSGAASMPSSPKQARKMS). The span at 29–43 (NDSQNMMESLSPKKY) shows a compositional bias: polar residues. 2 positions are modified to phosphoserine: serine 71 and serine 73. Positions 74 to 96 (PLGTSVRSSPSLAKIQGSKQFSY) are enriched in polar residues. The span at 126–144 (ADFDHYTGRDSERALRLSE) shows a compositional bias: basic and acidic residues. Phosphoserine occurs at positions 157, 204, 212, 242, and 245. The tract at residues 265-286 (NQLTPLSLPPRNSLGNSKRTKL) is disordered. Phosphoserine occurs at positions 330, 334, 348, 351, 384, 387, 415, 420, 468, 489, and 501. Phosphothreonine is present on threonine 504. Phosphoserine is present on serine 513. Positions 525-567 (LSQSSASFFTPRSTRNDELLSDLTRTPPPPSSTFPKASSESSY) are disordered. Residues threonine 550 and threonine 574 each carry the phosphothreonine modification. Coiled-coil stretches lie at residues 584–696 (SQEL…LDNC) and 722–807 (FEDL…LCNL). Phosphothreonine is present on threonine 898. Residues 1032-1098 (IARIEEMERL…QKLIEKEVKI (67 aa)) are a coiled coil. Positions 1143–1246 (EKTCRGFLIK…WMDVIVTGAE (104 aa)) constitute a PH domain.

Interacts with FLNC. Interacts with AMOTL2; interaction may facilitate PHLDB2 localization to the myotube podosome cortex that surrounds the core. Part of a cortical microtubule stabilization complex (CMSC) composed of KANK1, PPFIA1, PPFIBP1, ERC1/ELKS, PHLDB2/LL5beta, CLASPs, KIF21A and possibly additional interactors; within CMSCs KANK1 and PHLDB2/LL5beta appear to be the core components for targeting of microtubule-binding proteins KIF21A and CLASPs, whereas PPFIA1, PPFIBP1 and ERC1/ELKS serve as scaffolds for protein clustering.

The protein resides in the cytoplasm. Its subcellular location is the cell cortex. The protein localises to the membrane. It is found in the cell projection. It localises to the podosome. In terms of biological role, seems to be involved in the assembly of the postsynaptic apparatus. May play a role in acetyl-choline receptor (AChR) aggregation in the postsynaptic membrane. This chain is Pleckstrin homology-like domain family B member 2 (PHLDB2), found in Homo sapiens (Human).